A 156-amino-acid polypeptide reads, in one-letter code: Small ribosomal subunit protein uS7A/uS7B (156 aa).

Belongs to the universal ribosomal protein uS7 family. Part of the 30S ribosomal subunit. Contacts proteins S9 and S11.

One of the primary rRNA binding proteins, it binds directly to 16S rRNA where it nucleates assembly of the head domain of the 30S subunit. Is located at the subunit interface close to the decoding center, probably blocks exit of the E-site tRNA. The protein is Small ribosomal subunit protein uS7A/uS7B of Bartonella bacilliformis (strain ATCC 35685 / KC583 / Herrer 020/F12,63).